The following is a 479-amino-acid chain: Ribosomal RNA small subunit methyltransferase F (479 aa).

Residues 125-131, Glu-149, Asp-176, and Asp-194 each bind S-adenosyl-L-methionine; that span reads AAAPGSK. The Nucleophile role is filled by Cys-247.

Belongs to the class I-like SAM-binding methyltransferase superfamily. RsmB/NOP family.

It is found in the cytoplasm. It catalyses the reaction cytidine(1407) in 16S rRNA + S-adenosyl-L-methionine = 5-methylcytidine(1407) in 16S rRNA + S-adenosyl-L-homocysteine + H(+). Specifically methylates the cytosine at position 1407 (m5C1407) of 16S rRNA. This chain is Ribosomal RNA small subunit methyltransferase F, found in Escherichia coli O157:H7 (strain EC4115 / EHEC).